We begin with the raw amino-acid sequence, 299 residues long: Ophiobolin family sesterterpenoid biosynthesis cluster acetyltransferase (299 aa).

The N-terminal stretch at 1 to 20 (MYFFRALLSPVVLWPALVSG) is a signal peptide. N-linked (GlcNAc...) asparagine glycosylation is found at asparagine 28, asparagine 58, asparagine 77, asparagine 126, asparagine 177, asparagine 212, and asparagine 282.

Belongs to the bfoA family.

The protein operates within secondary metabolite biosynthesis; terpenoid biosynthesis. Acetyltransferase; part of the gene cluster that mediates the biosynthesis of an ophiobolin family sesterterpenoid. In terms of biological role, sesterterpenoid synthase; part of the gene cluster that mediates the biosynthesis of an ophiobolin family sesterterpenoid. The chain is Ophiobolin family sesterterpenoid biosynthesis cluster acetyltransferase from Aspergillus terreus.